A 560-amino-acid chain; its full sequence is Formate--tetrahydrofolate ligase (560 aa).

ATP is bound at residue 69-76 (TPAGEGKS).

It belongs to the formate--tetrahydrofolate ligase family.

The enzyme catalyses (6S)-5,6,7,8-tetrahydrofolate + formate + ATP = (6R)-10-formyltetrahydrofolate + ADP + phosphate. It participates in one-carbon metabolism; tetrahydrofolate interconversion. This Listeria monocytogenes serovar 1/2a (strain ATCC BAA-679 / EGD-e) protein is Formate--tetrahydrofolate ligase.